Here is a 276-residue protein sequence, read N- to C-terminus: Shikimate dehydrogenase (NADP(+)) (276 aa).

Residues 14–16 and T61 contribute to the shikimate site; that span reads SKS. The Proton acceptor role is filled by K65. Residue D77 coordinates NADP(+). Positions 86 and 102 each coordinate shikimate. NADP(+)-binding positions include 127 to 131, 151 to 156, and M214; these read GAGGA and NRTPDK. Residue Y216 coordinates shikimate. G238 provides a ligand contact to NADP(+).

The protein belongs to the shikimate dehydrogenase family. Homodimer.

The enzyme catalyses shikimate + NADP(+) = 3-dehydroshikimate + NADPH + H(+). It participates in metabolic intermediate biosynthesis; chorismate biosynthesis; chorismate from D-erythrose 4-phosphate and phosphoenolpyruvate: step 4/7. In terms of biological role, involved in the biosynthesis of the chorismate, which leads to the biosynthesis of aromatic amino acids. Catalyzes the reversible NADPH linked reduction of 3-dehydroshikimate (DHSA) to yield shikimate (SA). The polypeptide is Shikimate dehydrogenase (NADP(+)) (Nitrosomonas europaea (strain ATCC 19718 / CIP 103999 / KCTC 2705 / NBRC 14298)).